Here is a 1416-residue protein sequence, read N- to C-terminus: DNA-directed RNA polymerase subunit beta (1416 aa).

The protein belongs to the RNA polymerase beta chain family. In plastids the minimal PEP RNA polymerase catalytic core is composed of four subunits: alpha, beta, beta', and beta''. When a (nuclear-encoded) sigma factor is associated with the core the holoenzyme is formed, which can initiate transcription.

It localises to the plastid. It is found in the chloroplast. It catalyses the reaction RNA(n) + a ribonucleoside 5'-triphosphate = RNA(n+1) + diphosphate. In terms of biological role, DNA-dependent RNA polymerase catalyzes the transcription of DNA into RNA using the four ribonucleoside triphosphates as substrates. This chain is DNA-directed RNA polymerase subunit beta, found in Oltmannsiellopsis viridis (Marine flagellate).